The sequence spans 317 residues: Protein phosphatase PTC7 homolog fig (317 aa).

Residues 46–312 enclose the PPM-type phosphatase domain; the sequence is PYLVTVVQGR…DDITLILASV (267 aa). Residues D90, G91, and D235 each coordinate Mn(2+).

It belongs to the PP2C family. Requires Mg(2+) as cofactor. It depends on Mn(2+) as a cofactor.

It carries out the reaction O-phospho-L-seryl-[protein] + H2O = L-seryl-[protein] + phosphate. It catalyses the reaction O-phospho-L-threonyl-[protein] + H2O = L-threonyl-[protein] + phosphate. The protein is Protein phosphatase PTC7 homolog fig of Drosophila erecta (Fruit fly).